A 1110-amino-acid chain; its full sequence is Ribosome assembly protein 1 (1110 aa).

One can recognise a tr-type G domain in the interval 17–262 (SCIRNICIVA…QKLGAKRENL (246 aa)). Residues 26–33 (AHVDHGKT), 102–106 (DSPGH), and 156–159 (NKID) each bind GTP. At Ser-431 the chain carries Phosphoserine.

The protein belongs to the TRAFAC class translation factor GTPase superfamily. Classic translation factor GTPase family.

The protein localises to the cytoplasm. It catalyses the reaction GTP + H2O = GDP + phosphate + H(+). With respect to regulation, GTPase activity is stimulated in the presence of 60S subunits. Its function is as follows. GTPase involved in the biogenesis of the 60S ribosomal subunit and translational activation of ribosomes. Together with SDO1, may trigger the GTP-dependent release of TIF6 from 60S pre-ribosomes in the cytoplasm, thereby activating ribosomes for translation competence by allowing 80S ribosome assembly and facilitating TIF6 recycling to the nucleus, where it is required for 60S rRNA processing and nuclear export. Inhibits GTPase activity of ribosome-bound EF-2. The polypeptide is Ribosome assembly protein 1 (RIA1) (Saccharomyces cerevisiae (strain ATCC 204508 / S288c) (Baker's yeast)).